The following is a 133-amino-acid chain: Small ribosomal subunit protein uS8 (133 aa).

The protein belongs to the universal ribosomal protein uS8 family. As to quaternary structure, part of the 30S ribosomal subunit. Contacts proteins S5 and S12.

Its function is as follows. One of the primary rRNA binding proteins, it binds directly to 16S rRNA central domain where it helps coordinate assembly of the platform of the 30S subunit. This Prochlorococcus marinus (strain MIT 9515) protein is Small ribosomal subunit protein uS8.